Reading from the N-terminus, the 65-residue chain is Conotoxin VnMLCL-031 (65 aa).

An N-terminal signal peptide occupies residues 1 to 19 (MLCLPXFIILLLLASPAAP). A propeptide spanning residues 20 to 43 (NPLQTRXQSNLIRAGPEDANIKTX) is cleaved from the precursor. Isoleucine 64 carries the isoleucine amide modification.

Belongs to the conotoxin T superfamily. In terms of tissue distribution, expressed by the venom duct.

The protein resides in the secreted. In Conus ventricosus (Mediterranean cone), this protein is Conotoxin VnMLCL-031.